Here is a 361-residue protein sequence, read N- to C-terminus: MGIINAEKLKAIESAMSHIEKQFGKGSVMKLGDHNISNMDAISTGCLDLDIALGIGGVPKGRIIEIYGPESSGKTTIALHIAAESQKKGGAVGYIDAEHALDPSYAQKLGVDVDSLIISQPDTGEQGLEIAEALVRSGAIDVLVVDSVAALVPKAEIEGEMGDSHIGLQARLMSQALRKLAGTINKTNCVAIFINQLREKVGVMFGSPETTTGGRALKFYASVRLDIRRIDSIKQGDSIIGNRTRIKVMKNKVAPPFKQAEFDIMYNEGISRCGNIVDVGVKEEIVQKSGAWFSYGDIRLGQGRENAKLYLKENPEVALDIENQIREKYNLPPAELFKAAAPEGAKENISAKDDVAVDTKE.

68–75 (GPESSGKT) is an ATP binding site. Residues 342-361 (PEGAKENISAKDDVAVDTKE) form a disordered region. A compositionally biased stretch (basic and acidic residues) spans 344 to 361 (GAKENISAKDDVAVDTKE).

This sequence belongs to the RecA family.

Its subcellular location is the cytoplasm. Can catalyze the hydrolysis of ATP in the presence of single-stranded DNA, the ATP-dependent uptake of single-stranded DNA by duplex DNA, and the ATP-dependent hybridization of homologous single-stranded DNAs. It interacts with LexA causing its activation and leading to its autocatalytic cleavage. In Clostridium beijerinckii (strain ATCC 51743 / NCIMB 8052) (Clostridium acetobutylicum), this protein is Protein RecA.